We begin with the raw amino-acid sequence, 301 residues long: Probable alpha-L-glutamate ligase (301 aa).

The ATP-grasp domain occupies 104–287 (LQLLSRKGVG…VAGRIVSFIE (184 aa)). ATP is bound by residues Lys141, 178 to 179 (EF), Asp187, and 211 to 213 (RSN). 3 residues coordinate Mg(2+): Asp248, Glu260, and Asn262. Residues Asp248, Glu260, and Asn262 each contribute to the Mn(2+) site.

Belongs to the RimK family. It depends on Mg(2+) as a cofactor. Mn(2+) is required as a cofactor.

This chain is Probable alpha-L-glutamate ligase, found in Thioalkalivibrio sulfidiphilus (strain HL-EbGR7).